A 667-amino-acid polypeptide reads, in one-letter code: tRNA 5-methylaminomethyl-2-thiouridine biosynthesis bifunctional protein MnmC (667 aa).

The tract at residues 1 to 241 is tRNA (mnm(5)s(2)U34)-methyltransferase; the sequence is MHKLTFAQLS…KREMLCGEKA (241 aa). The segment at 268-667 is FAD-dependent cmnm(5)s(2)U34 oxidoreductase; sequence VGGGIASLFV…RKWLKGSKVV (400 aa).

In the N-terminal section; belongs to the methyltransferase superfamily. tRNA (mnm(5)s(2)U34)-methyltransferase family. The protein in the C-terminal section; belongs to the DAO family. It depends on FAD as a cofactor.

It localises to the cytoplasm. It catalyses the reaction 5-aminomethyl-2-thiouridine(34) in tRNA + S-adenosyl-L-methionine = 5-methylaminomethyl-2-thiouridine(34) in tRNA + S-adenosyl-L-homocysteine + H(+). Its function is as follows. Catalyzes the last two steps in the biosynthesis of 5-methylaminomethyl-2-thiouridine (mnm(5)s(2)U) at the wobble position (U34) in tRNA. Catalyzes the FAD-dependent demodification of cmnm(5)s(2)U34 to nm(5)s(2)U34, followed by the transfer of a methyl group from S-adenosyl-L-methionine to nm(5)s(2)U34, to form mnm(5)s(2)U34. The sequence is that of tRNA 5-methylaminomethyl-2-thiouridine biosynthesis bifunctional protein MnmC from Haemophilus ducreyi (strain 35000HP / ATCC 700724).